A 585-amino-acid polypeptide reads, in one-letter code: Arginine--tRNA ligase (585 aa).

The short motif at 127 to 137 (PNTNKPLHVGH) is the 'HIGH' region element.

The protein belongs to the class-I aminoacyl-tRNA synthetase family. As to quaternary structure, monomer.

It localises to the cytoplasm. The enzyme catalyses tRNA(Arg) + L-arginine + ATP = L-arginyl-tRNA(Arg) + AMP + diphosphate. This Borrelia garinii subsp. bavariensis (strain ATCC BAA-2496 / DSM 23469 / PBi) (Borreliella bavariensis) protein is Arginine--tRNA ligase.